The following is a 156-amino-acid chain: Small ribosomal subunit protein uS7 (156 aa).

This sequence belongs to the universal ribosomal protein uS7 family. As to quaternary structure, part of the 30S ribosomal subunit. Contacts proteins S9 and S11.

In terms of biological role, one of the primary rRNA binding proteins, it binds directly to 16S rRNA where it nucleates assembly of the head domain of the 30S subunit. Is located at the subunit interface close to the decoding center, probably blocks exit of the E-site tRNA. The sequence is that of Small ribosomal subunit protein uS7 from Streptomyces griseus subsp. griseus (strain JCM 4626 / CBS 651.72 / NBRC 13350 / KCC S-0626 / ISP 5235).